The primary structure comprises 222 residues: N-(5'-phosphoribosyl)anthranilate isomerase (222 aa).

Belongs to the TrpF family.

It carries out the reaction N-(5-phospho-beta-D-ribosyl)anthranilate = 1-(2-carboxyphenylamino)-1-deoxy-D-ribulose 5-phosphate. It functions in the pathway amino-acid biosynthesis; L-tryptophan biosynthesis; L-tryptophan from chorismate: step 3/5. This is N-(5'-phosphoribosyl)anthranilate isomerase from Beijerinckia indica subsp. indica (strain ATCC 9039 / DSM 1715 / NCIMB 8712).